A 200-amino-acid chain; its full sequence is ATP-dependent Clp protease proteolytic subunit (200 aa).

S103 (nucleophile) is an active-site residue. H128 is an active-site residue.

It belongs to the peptidase S14 family. In terms of assembly, fourteen ClpP subunits assemble into 2 heptameric rings which stack back to back to give a disk-like structure with a central cavity, resembling the structure of eukaryotic proteasomes.

Its subcellular location is the cytoplasm. It catalyses the reaction Hydrolysis of proteins to small peptides in the presence of ATP and magnesium. alpha-casein is the usual test substrate. In the absence of ATP, only oligopeptides shorter than five residues are hydrolyzed (such as succinyl-Leu-Tyr-|-NHMec, and Leu-Tyr-Leu-|-Tyr-Trp, in which cleavage of the -Tyr-|-Leu- and -Tyr-|-Trp bonds also occurs).. Its function is as follows. Cleaves peptides in various proteins in a process that requires ATP hydrolysis. Has a chymotrypsin-like activity. Plays a major role in the degradation of misfolded proteins. This is ATP-dependent Clp protease proteolytic subunit from Vibrio vulnificus (strain CMCP6).